A 308-amino-acid polypeptide reads, in one-letter code: Methionyl-tRNA formyltransferase (308 aa).

110 to 113 (SLLP) is a (6S)-5,6,7,8-tetrahydrofolate binding site.

Belongs to the Fmt family.

The catalysed reaction is L-methionyl-tRNA(fMet) + (6R)-10-formyltetrahydrofolate = N-formyl-L-methionyl-tRNA(fMet) + (6S)-5,6,7,8-tetrahydrofolate + H(+). Its function is as follows. Attaches a formyl group to the free amino group of methionyl-tRNA(fMet). The formyl group appears to play a dual role in the initiator identity of N-formylmethionyl-tRNA by promoting its recognition by IF2 and preventing the misappropriation of this tRNA by the elongation apparatus. The chain is Methionyl-tRNA formyltransferase from Neisseria gonorrhoeae (strain NCCP11945).